A 306-amino-acid polypeptide reads, in one-letter code: Protein FAM228A (306 aa).

Residues 237-277 (HASKLSQQNKGAEKKGLALGTRAQRPRSWAAADSPQGTPLV) are disordered. Ser-270 is modified (phosphoserine).

It belongs to the FAM228 family.

This is Protein FAM228A (Fam228a) from Rattus norvegicus (Rat).